The chain runs to 123 residues: U13-hexatoxin-Hi1a (123 aa).

Positions 1–20 (MEMSLRVALFFAFWVCLTTG) are cleaved as a signal peptide. BPTI/Kunitz inhibitor domains follow at residues 26–76 (CYQE…ERTC) and 86–123 (CSLE…GGNV). 5 disulfide bridges follow: C26–C76, C35–C59, C51–C72, C86–C111, and C95–C119.

The protein belongs to the venom Kunitz-type family. 02 (native) subfamily. Expressed by the venom gland.

It is found in the secreted. Dual-function toxin that inhibits both serine proteases and voltage-gated potassium channels (Kv). The protein is U13-hexatoxin-Hi1a of Hadronyche infensa (Fraser island funnel-web spider).